Reading from the N-terminus, the 930-residue chain is Isoleucine--tRNA ligase (930 aa).

Positions 57–67 (PYANGNIHVGH) match the 'HIGH' region motif. Glu-554 serves as a coordination point for L-isoleucyl-5'-AMP. The 'KMSKS' region motif lies at 595–599 (KMSKS). Position 598 (Lys-598) interacts with ATP. Positions 888, 891, 908, and 911 each coordinate Zn(2+).

Belongs to the class-I aminoacyl-tRNA synthetase family. IleS type 1 subfamily. Monomer. Zn(2+) is required as a cofactor.

Its subcellular location is the cytoplasm. The catalysed reaction is tRNA(Ile) + L-isoleucine + ATP = L-isoleucyl-tRNA(Ile) + AMP + diphosphate. Catalyzes the attachment of isoleucine to tRNA(Ile). As IleRS can inadvertently accommodate and process structurally similar amino acids such as valine, to avoid such errors it has two additional distinct tRNA(Ile)-dependent editing activities. One activity is designated as 'pretransfer' editing and involves the hydrolysis of activated Val-AMP. The other activity is designated 'posttransfer' editing and involves deacylation of mischarged Val-tRNA(Ile). The chain is Isoleucine--tRNA ligase from Streptococcus sanguinis (strain SK36).